A 152-amino-acid chain; its full sequence is Deoxyuridine 5'-triphosphate nucleotidohydrolase (152 aa).

Residues 71–73 (RSG), Asn-84, 88–90 (LID), and Met-98 contribute to the substrate site.

It belongs to the dUTPase family. Requires Mg(2+) as cofactor.

It catalyses the reaction dUTP + H2O = dUMP + diphosphate + H(+). It functions in the pathway pyrimidine metabolism; dUMP biosynthesis; dUMP from dCTP (dUTP route): step 2/2. Its function is as follows. This enzyme is involved in nucleotide metabolism: it produces dUMP, the immediate precursor of thymidine nucleotides and it decreases the intracellular concentration of dUTP so that uracil cannot be incorporated into DNA. The protein is Deoxyuridine 5'-triphosphate nucleotidohydrolase of Haemophilus ducreyi (strain 35000HP / ATCC 700724).